Consider the following 159-residue polypeptide: 2-C-methyl-D-erythritol 2,4-cyclodiphosphate synthase (159 aa).

Aspartate 10 and histidine 12 together coordinate a divalent metal cation. Residues 10 to 12 (DVH) and 36 to 37 (HS) contribute to the 4-CDP-2-C-methyl-D-erythritol 2-phosphate site. Residue histidine 44 participates in a divalent metal cation binding. 4-CDP-2-C-methyl-D-erythritol 2-phosphate contacts are provided by residues 58-60 (DIG), 134-137 (TTSE), phenylalanine 141, and arginine 144.

Belongs to the IspF family. As to quaternary structure, homotrimer. A divalent metal cation is required as a cofactor.

The enzyme catalyses 4-CDP-2-C-methyl-D-erythritol 2-phosphate = 2-C-methyl-D-erythritol 2,4-cyclic diphosphate + CMP. The protein operates within isoprenoid biosynthesis; isopentenyl diphosphate biosynthesis via DXP pathway; isopentenyl diphosphate from 1-deoxy-D-xylulose 5-phosphate: step 4/6. In terms of biological role, involved in the biosynthesis of isopentenyl diphosphate (IPP) and dimethylallyl diphosphate (DMAPP), two major building blocks of isoprenoid compounds. Catalyzes the conversion of 4-diphosphocytidyl-2-C-methyl-D-erythritol 2-phosphate (CDP-ME2P) to 2-C-methyl-D-erythritol 2,4-cyclodiphosphate (ME-CPP) with a corresponding release of cytidine 5-monophosphate (CMP). This is 2-C-methyl-D-erythritol 2,4-cyclodiphosphate synthase from Cereibacter sphaeroides (strain ATCC 17029 / ATH 2.4.9) (Rhodobacter sphaeroides).